We begin with the raw amino-acid sequence, 182 residues long: NADH-quinone oxidoreductase subunit I (182 aa).

2 consecutive 4Fe-4S ferredoxin-type domains span residues 52 to 82 and 92 to 121; these read LTRD…LQKA and DFFR…LTPD. [4Fe-4S] cluster contacts are provided by Cys-62, Cys-65, Cys-68, Cys-72, Cys-101, Cys-104, Cys-107, and Cys-111.

This sequence belongs to the complex I 23 kDa subunit family. As to quaternary structure, NDH-1 is composed of 13 different subunits. Subunits NuoA, H, J, K, L, M, N constitute the membrane sector of the complex. Requires [4Fe-4S] cluster as cofactor.

The protein localises to the cell inner membrane. It carries out the reaction a quinone + NADH + 5 H(+)(in) = a quinol + NAD(+) + 4 H(+)(out). Functionally, NDH-1 shuttles electrons from NADH, via FMN and iron-sulfur (Fe-S) centers, to quinones in the respiratory chain. The immediate electron acceptor for the enzyme in this species is believed to be ubiquinone. Couples the redox reaction to proton translocation (for every two electrons transferred, four hydrogen ions are translocated across the cytoplasmic membrane), and thus conserves the redox energy in a proton gradient. This Pseudomonas savastanoi pv. phaseolicola (strain 1448A / Race 6) (Pseudomonas syringae pv. phaseolicola (strain 1448A / Race 6)) protein is NADH-quinone oxidoreductase subunit I.